A 261-amino-acid chain; its full sequence is Taurine import ATP-binding protein TauB (261 aa).

The ABC transporter domain maps to 4–233; it reads LQLEGIGAHY…RYSAGESARA (230 aa). 38–45 is a binding site for ATP; it reads GPSGSGKT.

It belongs to the ABC transporter superfamily. Taurine importer (TC 3.A.1.17.1) family. As to quaternary structure, the complex is composed of two ATP-binding proteins (TauB), two transmembrane proteins (TauC) and a solute-binding protein (TauA).

The protein localises to the cell inner membrane. It carries out the reaction taurine(out) + ATP + H2O = taurine(in) + ADP + phosphate + H(+). Functionally, part of the ABC transporter complex TauABC involved in taurine import. Responsible for energy coupling to the transport system. The protein is Taurine import ATP-binding protein TauB of Pseudomonas syringae pv. tomato (strain ATCC BAA-871 / DC3000).